Here is a 1362-residue protein sequence, read N- to C-terminus: DNA-directed RNA polymerase subunit beta' (1362 aa).

Residues 1 to 14 (MTSSSKSRKSKSSK) show a composition bias toward basic residues. Residues 1–39 (MTSSSKSRKSKSSKASKAAKEAPVSASRPLSKTPPPFRN) are disordered. The segment covering 15-27 (ASKAAKEAPVSAS) has biased composition (low complexity). 4 residues coordinate Zn(2+): cysteine 248, cysteine 315, cysteine 322, and cysteine 325. Residues 1316–1336 (TRHNIDPSASNFAAFTRPDAD) form a disordered region.

It belongs to the RNA polymerase beta' chain family. RpoC2 subfamily. In terms of assembly, in cyanobacteria the RNAP catalytic core is composed of 2 alpha, 1 beta, 1 beta', 1 gamma and 1 omega subunit. When a sigma factor is associated with the core the holoenzyme is formed, which can initiate transcription. Requires Zn(2+) as cofactor.

The enzyme catalyses RNA(n) + a ribonucleoside 5'-triphosphate = RNA(n+1) + diphosphate. Functionally, DNA-dependent RNA polymerase catalyzes the transcription of DNA into RNA using the four ribonucleoside triphosphates as substrates. The protein is DNA-directed RNA polymerase subunit beta' of Synechococcus sp. (strain CC9605).